Consider the following 178-residue polypeptide: ATP synthase subunit delta (178 aa).

The protein belongs to the ATPase delta chain family. F-type ATPases have 2 components, F(1) - the catalytic core - and F(0) - the membrane proton channel. F(1) has five subunits: alpha(3), beta(3), gamma(1), delta(1), epsilon(1). F(0) has three main subunits: a(1), b(2) and c(10-14). The alpha and beta chains form an alternating ring which encloses part of the gamma chain. F(1) is attached to F(0) by a central stalk formed by the gamma and epsilon chains, while a peripheral stalk is formed by the delta and b chains.

The protein localises to the cell membrane. Its function is as follows. F(1)F(0) ATP synthase produces ATP from ADP in the presence of a proton or sodium gradient. F-type ATPases consist of two structural domains, F(1) containing the extramembraneous catalytic core and F(0) containing the membrane proton channel, linked together by a central stalk and a peripheral stalk. During catalysis, ATP synthesis in the catalytic domain of F(1) is coupled via a rotary mechanism of the central stalk subunits to proton translocation. Functionally, this protein is part of the stalk that links CF(0) to CF(1). It either transmits conformational changes from CF(0) to CF(1) or is implicated in proton conduction. This chain is ATP synthase subunit delta, found in Streptococcus pyogenes serotype M4 (strain MGAS10750).